Reading from the N-terminus, the 335-residue chain is Mycobacterial beta-ketoacyl-[acyl-carrier-protein] synthase III (335 aa).

Active-site residues include cysteine 122 and histidine 258. The segment at 259-263 (QANSR) is ACP-binding. The active site involves asparagine 289.

It belongs to the thiolase-like superfamily. FabH family. Homodimer.

Its subcellular location is the cytoplasm. The enzyme catalyses malonyl-[ACP] + dodecanoyl-CoA + H(+) = 3-oxotetradecanoyl-[ACP] + CO2 + CoA. It participates in lipid metabolism; fatty acid biosynthesis. It functions in the pathway lipid metabolism; mycolic acid biosynthesis. Catalyzes the condensation reaction of fatty acid synthesis by the addition to an acyl acceptor of two carbons from malonyl-ACP. Catalyzes the first condensation reaction which initiates fatty acid synthesis and may therefore play a role in governing the total rate of fatty acid production. Possesses both acetoacetyl-ACP synthase and acetyl transacylase activities. Its substrate specificity determines the biosynthesis of branched-chain and/or straight-chain of fatty acids. The chain is Mycobacterial beta-ketoacyl-[acyl-carrier-protein] synthase III from Mycobacterium marinum (strain ATCC BAA-535 / M).